A 224-amino-acid chain; its full sequence is tRNA (guanine-N(7)-)-methyltransferase (224 aa).

The S-adenosyl-L-methionine site is built by E54, E79, E106, and D129. Residue D129 is part of the active site. 2 residues coordinate substrate: K133 and D165.

The protein belongs to the class I-like SAM-binding methyltransferase superfamily. TrmB family.

The catalysed reaction is guanosine(46) in tRNA + S-adenosyl-L-methionine = N(7)-methylguanosine(46) in tRNA + S-adenosyl-L-homocysteine. It functions in the pathway tRNA modification; N(7)-methylguanine-tRNA biosynthesis. Functionally, catalyzes the formation of N(7)-methylguanine at position 46 (m7G46) in tRNA. This is tRNA (guanine-N(7)-)-methyltransferase from Chlamydia trachomatis serovar D (strain ATCC VR-885 / DSM 19411 / UW-3/Cx).